The chain runs to 496 residues: Cytochrome P450 monooxygenase ausR (496 aa).

Residues 12-32 traverse the membrane as a helical segment; it reads IGLYILWTIPVLFVIFKLLAP. Cysteine 435 contributes to the heme binding site.

It belongs to the cytochrome P450 family. Heme is required as a cofactor.

The protein localises to the membrane. Its pathway is secondary metabolite biosynthesis; terpenoid biosynthesis. In terms of biological role, cytochrome P450 monooxygenase; part of the gene cluster B that mediates the biosynthesis of the fungal meroterpenoid acetoxydehydroaustin. The first step of the pathway is the synthesis of 3,5-dimethylorsellinic acid by the polyketide synthase ausA. 3,5-dimethylorsellinic acid is then prenylated by the polyprenyl transferase ausN. Further epoxidation by the FAD-dependent monooxygenase ausM and cyclization by the probable terpene cyclase ausL lead to the formation of protoaustinoid A. Protoaustinoid A is then oxidized to spiro-lactone preaustinoid A3 by the combined action of the FAD-binding monooxygenases ausB and ausC, and the dioxygenase ausE. Acid-catalyzed keto-rearrangement and ring contraction of the tetraketide portion of preaustinoid A3 by ausJ lead to the formation of preaustinoid A4. The aldo-keto reductase ausK, with the help of ausH, is involved in the next step by transforming preaustinoid A4 into isoaustinone which is in turn hydroxylated by the P450 monooxygenase ausI to form austinolide. The cytochrome P450 monooxygenase ausG then modifies austinolide to austinol. Austinol is further acetylated to austin by the O-acetyltransferase ausP, which spontaneously changes to dehydroaustin. The cytochrome P450 monooxygenase then converts dehydroaustin is into 7-dehydrodehydroaustin. The hydroxylation catalyzed by ausR permits the second O-acetyltransferase ausQ to add an additional acetyl group to the molecule, leading to the formation of acetoxydehydroaustin. Due to genetic rearrangements of the clusters and the subsequent loss of some enzymes, the end product of the Penicillium brasilianum austinoid biosynthesis clusters is acetoxydehydroaustin. The chain is Cytochrome P450 monooxygenase ausR from Penicillium brasilianum.